We begin with the raw amino-acid sequence, 108 residues long: Putative DNA-directed RNA polymerase subunit 1 inactive homolog (108 aa).

This Acanthamoeba polyphaga (Amoeba) protein is Putative DNA-directed RNA polymerase subunit 1 inactive homolog.